The sequence spans 411 residues: Lissencephaly-1 homolog (411 aa).

The 33-residue stretch at 9-41 folds into the LisH domain; the sequence is QREELNQAIADYLGSNGYADSLEAFRKEADLST. The stretch at 56–83 forms a coiled coil; that stretch reads TSVIRLQKKVMELEAKLTEAEKEVIEGA. 7 WD repeats span residues 106–147, 148–187, 191–230, 233–272, 275–334, 337–376, and 379–411; these read GHRA…RSLK, GHTDSVQDVAFDAQGKLLASCSADLSIKLWDFQQTYECVK, GHDHNVSSVAFVPAGDYVLSASRDRTVKMWEVATGYCVKT, GHREWVRMVRVHIEGSIFATCSNDHTIRVWLTNSRDCKVE, DHEH…CLFT, GHDNWVRGLAFHPAGKYLVSASDDKTIRVWDLRNKRCMKT, and AHQHFCTSIDFHKAHPYVISGSVDQTVKVWECR.

This sequence belongs to the WD repeat LIS1/nudF family.

Its subcellular location is the cytoplasm. It localises to the cytoskeleton. The protein resides in the microtubule organizing center. The protein localises to the centrosome. Functionally, positively regulates the activity of the minus-end directed microtubule motor protein dynein. May enhance dynein-mediated microtubule sliding by targeting dynein to the microtubule plus end. Required for several dynein- and microtubule-dependent processes. The sequence is that of Lissencephaly-1 homolog from Drosophila ananassae (Fruit fly).